We begin with the raw amino-acid sequence, 431 residues long: Cytochrome c oxidase subunit 3 (431 aa).

The next 7 helical transmembrane spans lie at 70–90 (IAPL…FGVI), 96–116 (FVIA…SIVF), 132–152 (LVMG…SFFW), 176–196 (VYSY…SGAI), 321–341 (LYFT…EYYF), 356–376 (FLLT…IGII), and 408–428 (LFYW…IYWW).

The protein belongs to the cytochrome c oxidase subunit 3 family. In terms of assembly, component of the cytochrome c oxidase (complex IV, CIV), a multisubunit enzyme composed of a catalytic core of 3 subunits and several supernumerary subunits. The complex exists as a monomer or a dimer and forms supercomplexes (SCs) in the inner mitochondrial membrane with ubiquinol-cytochrome c oxidoreductase (cytochrome b-c1 complex, complex III, CIII).

Its subcellular location is the mitochondrion inner membrane. It carries out the reaction 4 Fe(II)-[cytochrome c] + O2 + 8 H(+)(in) = 4 Fe(III)-[cytochrome c] + 2 H2O + 4 H(+)(out). Its function is as follows. Component of the cytochrome c oxidase, the last enzyme in the mitochondrial electron transport chain which drives oxidative phosphorylation. The respiratory chain contains 3 multisubunit complexes succinate dehydrogenase (complex II, CII), ubiquinol-cytochrome c oxidoreductase (cytochrome b-c1 complex, complex III, CIII) and cytochrome c oxidase (complex IV, CIV), that cooperate to transfer electrons derived from NADH and succinate to molecular oxygen, creating an electrochemical gradient over the inner membrane that drives transmembrane transport and the ATP synthase. Cytochrome c oxidase is the component of the respiratory chain that catalyzes the reduction of oxygen to water. Electrons originating from reduced cytochrome c in the intermembrane space (IMS) are transferred via the dinuclear copper A center (CU(A)) of subunit 2 and heme A of subunit 1 to the active site in subunit 1, a binuclear center (BNC) formed by heme A3 and copper B (CU(B)). The BNC reduces molecular oxygen to 2 water molecules using 4 electrons from cytochrome c in the IMS and 4 protons from the mitochondrial matrix. This chain is Cytochrome c oxidase subunit 3 (cox3), found in Dictyostelium citrinum (Slime mold).